Reading from the N-terminus, the 390-residue chain is Putative nickel insertion protein (390 aa).

It belongs to the LarC family.

This Myxococcus xanthus (strain DK1622) protein is Putative nickel insertion protein.